The following is a 59-amino-acid chain: Large ribosomal subunit protein uL30 (59 aa).

The protein belongs to the universal ribosomal protein uL30 family. Part of the 50S ribosomal subunit.

The protein is Large ribosomal subunit protein uL30 of Staphylococcus saprophyticus subsp. saprophyticus (strain ATCC 15305 / DSM 20229 / NCIMB 8711 / NCTC 7292 / S-41).